The following is a 600-amino-acid chain: Elongation factor 4 (600 aa).

The 183-residue stretch at 5–187 (KYIRNFSIVA…EIVEKIPAPE (183 aa)) folds into the tr-type G domain. GTP contacts are provided by residues 17–22 (DHGKST) and 134–137 (NKVD).

It belongs to the TRAFAC class translation factor GTPase superfamily. Classic translation factor GTPase family. LepA subfamily.

The protein localises to the cell membrane. The catalysed reaction is GTP + H2O = GDP + phosphate + H(+). Required for accurate and efficient protein synthesis under certain stress conditions. May act as a fidelity factor of the translation reaction, by catalyzing a one-codon backward translocation of tRNAs on improperly translocated ribosomes. Back-translocation proceeds from a post-translocation (POST) complex to a pre-translocation (PRE) complex, thus giving elongation factor G a second chance to translocate the tRNAs correctly. Binds to ribosomes in a GTP-dependent manner. The polypeptide is Elongation factor 4 (Clostridium perfringens (strain 13 / Type A)).